The following is a 98-amino-acid chain: Co-chaperonin GroES (98 aa).

The protein belongs to the GroES chaperonin family. As to quaternary structure, heptamer of 7 subunits arranged in a ring. Interacts with the chaperonin GroEL.

It localises to the cytoplasm. Together with the chaperonin GroEL, plays an essential role in assisting protein folding. The GroEL-GroES system forms a nano-cage that allows encapsulation of the non-native substrate proteins and provides a physical environment optimized to promote and accelerate protein folding. GroES binds to the apical surface of the GroEL ring, thereby capping the opening of the GroEL channel. The polypeptide is Co-chaperonin GroES (Bartonella tribocorum (strain CIP 105476 / IBS 506)).